The following is an 89-amino-acid chain: NAD(P)H-quinone oxidoreductase subunit L (89 aa).

Transmembrane regions (helical) follow at residues 29-46 and 59-79; these read VLGGMYLFVVPLFLFYWM and LFIYGLVFLFFPGMVLFAPFL.

The protein belongs to the complex I NdhL subunit family. As to quaternary structure, NDH-1 can be composed of about 15 different subunits; different subcomplexes with different compositions have been identified which probably have different functions.

The protein resides in the cellular thylakoid membrane. It catalyses the reaction a plastoquinone + NADH + (n+1) H(+)(in) = a plastoquinol + NAD(+) + n H(+)(out). It carries out the reaction a plastoquinone + NADPH + (n+1) H(+)(in) = a plastoquinol + NADP(+) + n H(+)(out). NDH-1 shuttles electrons from an unknown electron donor, via FMN and iron-sulfur (Fe-S) centers, to quinones in the respiratory and/or the photosynthetic chain. The immediate electron acceptor for the enzyme in this species is believed to be plastoquinone. Couples the redox reaction to proton translocation, and thus conserves the redox energy in a proton gradient. Cyanobacterial NDH-1 also plays a role in inorganic carbon-concentration. The protein is NAD(P)H-quinone oxidoreductase subunit L of Prochlorococcus marinus (strain NATL1A).